A 591-amino-acid chain; its full sequence is Aspartate--tRNA(Asp/Asn) ligase (591 aa).

Position 176 (glutamate 176) interacts with L-aspartate. Residues 200–203 (QLFK) are aspartate. Arginine 222 serves as a coordination point for L-aspartate. ATP-binding positions include 222–224 (RDE) and glutamine 231. Position 450 (histidine 450) interacts with L-aspartate. ATP is bound at residue glutamate 484. Arginine 491 is an L-aspartate binding site. 536–539 (GLDR) is an ATP binding site.

The protein belongs to the class-II aminoacyl-tRNA synthetase family. Type 1 subfamily. In terms of assembly, homodimer.

It localises to the cytoplasm. The enzyme catalyses tRNA(Asx) + L-aspartate + ATP = L-aspartyl-tRNA(Asx) + AMP + diphosphate. Functionally, aspartyl-tRNA synthetase with relaxed tRNA specificity since it is able to aspartylate not only its cognate tRNA(Asp) but also tRNA(Asn). Reaction proceeds in two steps: L-aspartate is first activated by ATP to form Asp-AMP and then transferred to the acceptor end of tRNA(Asp/Asn). This is Aspartate--tRNA(Asp/Asn) ligase from Bacillus cereus (strain ATCC 14579 / DSM 31 / CCUG 7414 / JCM 2152 / NBRC 15305 / NCIMB 9373 / NCTC 2599 / NRRL B-3711).